The following is a 604-amino-acid chain: Sulfite reductase [NADPH] flavoprotein alpha-component (604 aa).

A Flavodoxin-like domain is found at 66-204 (VTVLSASQTG…AADGWTGRIV (139 aa)). FMN-binding positions include 72-77 (SQTGNA), 119-122 (STQG), and 155-164 (LGDSSYPNFC). A disordered region spans residues 212–231 (AKNRATPAPQTTPPAGLQTA). Residues 216-231 (ATPAPQTTPPAGLQTA) show a composition bias toward low complexity. Residues 239-453 (ADPFPAALLA…VERNDGFRLP (215 aa)) enclose the FAD-binding FR-type domain. Residues Thr-327, Gln-361, 391 to 394 (RLYS), 409 to 411 (TVG), and 424 to 427 (GGAS) contribute to the FAD site. Residues 524 to 525 (SR), 530 to 534 (KIYVQ), and Asp-566 contribute to the NADP(+) site. Tyr-604 serves as a coordination point for FAD.

The protein belongs to the NADPH-dependent sulphite reductase flavoprotein subunit CysJ family. This sequence in the N-terminal section; belongs to the flavodoxin family. It in the C-terminal section; belongs to the flavoprotein pyridine nucleotide cytochrome reductase family. As to quaternary structure, alpha(8)-beta(8). The alpha component is a flavoprotein, the beta component is a hemoprotein. FAD is required as a cofactor. The cofactor is FMN.

It carries out the reaction hydrogen sulfide + 3 NADP(+) + 3 H2O = sulfite + 3 NADPH + 4 H(+). It functions in the pathway sulfur metabolism; hydrogen sulfide biosynthesis; hydrogen sulfide from sulfite (NADPH route): step 1/1. In terms of biological role, component of the sulfite reductase complex that catalyzes the 6-electron reduction of sulfite to sulfide. This is one of several activities required for the biosynthesis of L-cysteine from sulfate. The flavoprotein component catalyzes the electron flow from NADPH -&gt; FAD -&gt; FMN to the hemoprotein component. The protein is Sulfite reductase [NADPH] flavoprotein alpha-component of Neisseria meningitidis serogroup C / serotype 2a (strain ATCC 700532 / DSM 15464 / FAM18).